A 268-amino-acid chain; its full sequence is Hemolysin C (268 aa).

CBS domains lie at 52–111 and 114–171; these read MVPR…NFSL and ILHK…IRDE.

This sequence belongs to the UPF0053 family.

In terms of biological role, bacterial hemolysins are exotoxins that attack blood cell membranes and cause cell rupture by mechanisms not clearly defined. This is Hemolysin C (tlyC) from Brachyspira hyodysenteriae (Treponema hyodysenteriae).